The primary structure comprises 245 residues: Small ribosomal subunit protein uS2 (245 aa).

The protein belongs to the universal ribosomal protein uS2 family.

The protein is Small ribosomal subunit protein uS2 of Pseudomonas putida (strain ATCC 47054 / DSM 6125 / CFBP 8728 / NCIMB 11950 / KT2440).